The primary structure comprises 132 residues: Intraflagellar transport protein 20 homolog (132 aa).

Positions 70-132 are IFT57-binding; it reads MKAIGARNLL…EFIDQFIFQK (63 aa). A coiled-coil region spans residues 74–114; it reads GARNLLKSIAKQREAQQQQLQALIAEKKMQLERYRVEYEAL.

Component of the IFT complex B, at least composed of IFT20, IFT22, IFT25, IFT27, IFT46, IFT52, TRAF3IP1/IFT54, IFT57, IFT74, IFT80, IFT81, and IFT88. Interacts directly with IFT57 and KIF3B/Kinesin II subunit. Interacts with IFT88. Interacts with CEP83. Interacts with SPEF2 (via C-terminus). Interacts with CBL and CBLB. Interacts with TRIP11. Interacts with TTC21A. Interacts with SPATA1. Interacts with USH1G. Interacts with CCDC146. Interacts with CEP78; regulating IFT20 stability and localization. In terms of tissue distribution, expressed in almost all tissues.

It localises to the golgi apparatus. Its subcellular location is the cis-Golgi network. It is found in the cytoplasm. The protein localises to the cytoskeleton. The protein resides in the microtubule organizing center. It localises to the centrosome. Its subcellular location is the centriole. It is found in the cilium basal body. The protein localises to the cell projection. The protein resides in the cilium. It localises to the cytoplasmic vesicle. Its subcellular location is the secretory vesicle. It is found in the acrosome. In terms of biological role, part of intraflagellar transport (IFT) particles involved in ciliary process assembly. May play a role in the trafficking of ciliary membrane proteins from the Golgi complex to the cilium. Regulates the platelet-derived growth factor receptor-alpha (PDGFRA) signaling pathway. Required for protein stability of E3 ubiquitin ligases CBL and CBLB that mediate ubiquitination and internalization of PDGFRA for proper feedback inhibition of PDGFRA signaling. Essential for male fertility. Plays an important role in spermatogenesis, particularly spermiogenesis, when germ cells form flagella. May play a role in the transport of flagellar proteins ODF2 and SPAG16 to build sperm flagella and in the removal of redundant sperm cytoplasm. Also involved in autophagy since it is required for trafficking of ATG16L and the expansion of the autophagic compartment. This is Intraflagellar transport protein 20 homolog (IFT20) from Homo sapiens (Human).